Reading from the N-terminus, the 498-residue chain is Diacylglycerol O-acyltransferase 1A (498 aa).

The segment at 1 to 67 (MAISDEPETV…ANSQPQQKQD (67 aa)) is disordered. The next 7 membrane-spanning stretches (helical) occupy residues 102-122 (HAGL…RLII), 146-166 (WPLF…FIVE), 178-198 (VVVV…VLVI), 203-223 (SAFL…LKLV), 253-273 (YPYN…TLCY), 295-315 (LIIF…PIVQ), and 342-362 (VWLC…AELL). An FYXDWWN motif motif is present at residues 369 to 375 (FYQDWWN). 3 helical membrane passes run 410–430 (AVAL…CIAV), 432–452 (CHIF…LVFI), and 465–485 (VGNM…CVLL). His-424 is an active-site residue.

It belongs to the membrane-bound acyltransferase family. Sterol o-acyltransferase subfamily. In terms of tissue distribution, highly expressed in flowers and pods. Expressed at low levels in roots, stems and leaves.

It localises to the endoplasmic reticulum membrane. The enzyme catalyses an acyl-CoA + a 1,2-diacyl-sn-glycerol = a triacyl-sn-glycerol + CoA. Its pathway is glycerolipid metabolism; triacylglycerol biosynthesis. In terms of biological role, major contributor to triacylglycerol (TAG) synthesis and oil accumulation in developing seeds. Catalyzes the acylation of the sn-3 hydroxy group of sn-1,2-diacylglycerol using acyl-CoA. Has a marked preference for oleoyl-CoA (18:1) and sn-1,2-dioleoylglycerol over vernoloyl-CoA and sn-1,2-divernoloylglycerol. Can use oleoyl-CoA, linoleoyl-CoA and linolenoyl-CoA as substrates. The protein is Diacylglycerol O-acyltransferase 1A of Glycine max (Soybean).